Consider the following 486-residue polypeptide: BTB/POZ domain and ankyrin repeat-containing protein NBCL (486 aa).

The BTB domain maps to 25-115 (SDVTFSVEGR…LYSGQVSIVP (91 aa)). The segment at 121 to 135 (RPNCGERGCWHTHCS) adopts a C2HC NPR-type zinc-finger fold. Positions 124, 129, 131, and 134 each coordinate Zn(2+). ANK repeat units lie at residues 257–286 (QKIRRMRRALDSSDVELVKLMVMGEGLNLD), 287–316 (EALALHYAVENCSREVVKALLELGAADVNY), 321–350 (AGKTPLHIAAEMVSPDMVAVLLDHHADPNV), and 354–388 (DNVTPLDILRTLTSDFLFKGAIPGLTHIEPNKLRL). Disordered stretches follow at residues 403 to 441 (EEGNANNNPPSSTTTTLPMYHHPMNDDHNSSSSSGNNHN) and 464 to 486 (QMSDDHGGRHGDPAMYHHSHHDY). 2 stretches are compositionally biased toward low complexity: residues 406–418 (NANNNPPSSTTTT) and 432–441 (SSSSSGNNHN). Over residues 466–475 (SDDHGGRHGD) the composition is skewed to basic and acidic residues.

It belongs to the plant 'ANKYRIN-BTB/POZ' family. 'NOOT-BOP-COCH-like' (NBCL) subfamily. Homodimer.

The protein resides in the nucleus. Its subcellular location is the cytoplasm. The protein localises to the cell membrane. The protein operates within protein modification; protein ubiquitination. Its function is as follows. May act as a substrate-specific adapter of an E3 ubiquitin-protein ligase complex (CUL3-RBX1-BTB) which mediates the ubiquitination and subsequent proteasomal degradation of target proteins. Transcriptional co-regulator involved in the promotion of leaf and floral meristem fate and determinacy. Necessary for the development of stipules at the base of petioles. Required for the abscission of senescent organs, probably by regulating the cell wall disorganization in abscission zones (AZs, e.g. pulvini at the base of leaves). Promotes slightly root-cap border cells separation from the root tip. Involved in the coordination of the symbiotic nodule developmental program; promotes the formation of root nodules by interacting directly with APP1 to modulate the expression of the nuclear transcription factor Y subunit (NF-YA1), a key nodulin. Necessary for the robust maintenance of nodule identity throughout the nodule developmental program. This chain is BTB/POZ domain and ankyrin repeat-containing protein NBCL, found in Lupinus angustifolius (Narrow-leaved blue lupine).